We begin with the raw amino-acid sequence, 51 residues long: Large ribosomal subunit protein eL39 (51 aa).

The tract at residues 1-23 (MPSQKSFRTKQKLAKAQKQNRPL) is disordered.

Belongs to the eukaryotic ribosomal protein eL39 family. In terms of assembly, component of the large ribosomal subunit. Mature ribosomes consist of a small (40S) and a large (60S) subunit. The 40S subunit contains about 32 different proteins and 1 molecule of RNA (18S). The 60S subunit contains 45 different proteins and 3 molecules of RNA (25S, 5.8S and 5S).

The protein localises to the cytoplasm. Its function is as follows. Component of the ribosome, a large ribonucleoprotein complex responsible for the synthesis of proteins in the cell. The small ribosomal subunit (SSU) binds messenger RNAs (mRNAs) and translates the encoded message by selecting cognate aminoacyl-transfer RNA (tRNA) molecules. The large subunit (LSU) contains the ribosomal catalytic site termed the peptidyl transferase center (PTC), which catalyzes the formation of peptide bonds, thereby polymerizing the amino acids delivered by tRNAs into a polypeptide chain. The nascent polypeptides leave the ribosome through a tunnel in the LSU and interact with protein factors that function in enzymatic processing, targeting, and the membrane insertion of nascent chains at the exit of the ribosomal tunnel. In Candida albicans (strain SC5314 / ATCC MYA-2876) (Yeast), this protein is Large ribosomal subunit protein eL39.